Here is a 384-residue protein sequence, read N- to C-terminus: Queuine tRNA-ribosyltransferase (384 aa).

Aspartate 103 serves as the catalytic Proton acceptor. Substrate contacts are provided by residues 103 to 107, aspartate 157, glutamine 200, and glycine 227; that span reads DSGGF. The tract at residues 258 to 264 is RNA binding; that stretch reads GVGTYRE. Aspartate 277 serves as the catalytic Nucleophile. The tract at residues 282–286 is RNA binding; important for wobble base 34 recognition; sequence TRLAR. 4 residues coordinate Zn(2+): cysteine 315, cysteine 317, cysteine 320, and histidine 346.

This sequence belongs to the queuine tRNA-ribosyltransferase family. Homodimer. Within each dimer, one monomer is responsible for RNA recognition and catalysis, while the other monomer binds to the replacement base PreQ1. Zn(2+) serves as cofactor.

The enzyme catalyses 7-aminomethyl-7-carbaguanine + guanosine(34) in tRNA = 7-aminomethyl-7-carbaguanosine(34) in tRNA + guanine. The protein operates within tRNA modification; tRNA-queuosine biosynthesis. Catalyzes the base-exchange of a guanine (G) residue with the queuine precursor 7-aminomethyl-7-deazaguanine (PreQ1) at position 34 (anticodon wobble position) in tRNAs with GU(N) anticodons (tRNA-Asp, -Asn, -His and -Tyr). Catalysis occurs through a double-displacement mechanism. The nucleophile active site attacks the C1' of nucleotide 34 to detach the guanine base from the RNA, forming a covalent enzyme-RNA intermediate. The proton acceptor active site deprotonates the incoming PreQ1, allowing a nucleophilic attack on the C1' of the ribose to form the product. After dissociation, two additional enzymatic reactions on the tRNA convert PreQ1 to queuine (Q), resulting in the hypermodified nucleoside queuosine (7-(((4,5-cis-dihydroxy-2-cyclopenten-1-yl)amino)methyl)-7-deazaguanosine). This chain is Queuine tRNA-ribosyltransferase, found in Synechococcus elongatus (strain ATCC 33912 / PCC 7942 / FACHB-805) (Anacystis nidulans R2).